A 1088-amino-acid chain; its full sequence is RNA-directed RNA polymerase (1088 aa).

One can recognise a RdRp catalytic domain in the interval 501–687; sequence LSYGDVTRFL…AKRYIAGGKI (187 aa).

The protein belongs to the reoviridae RNA-directed RNA polymerase family. In terms of assembly, interacts with VP3 (Potential). Interacts with VP2; this interaction activates VP1. Interacts with NSP5; this interaction is probably necessary for the formation of functional virus factories. Interacts with NSP2; this interaction is weak. It depends on Mg(2+) as a cofactor.

It is found in the virion. The enzyme catalyses RNA(n) + a ribonucleoside 5'-triphosphate = RNA(n+1) + diphosphate. Its function is as follows. RNA-directed RNA polymerase that is involved in both transcription and genome replication. Together with VP3 capping enzyme, forms an enzyme complex positioned near the channels situated at each of the five-fold vertices of the core. Following infection, the outermost layer of the virus is lost, leaving a double-layered particle (DLP) made up of the core and VP6 shell. VP1 then catalyzes the transcription of fully conservative plus-strand genomic RNAs that are extruded through the DLP's channels into the cytoplasm where they function as mRNAs for translation of viral proteins. One copy of each of the viral (+)RNAs is also recruited during core assembly, together with newly synthesized polymerase complexes and VP2. The polymerase of these novo-formed particles catalyzes the synthesis of complementary minus-strands leading to dsRNA formation. To do so, the polymerase specifically recognizes and binds 4 bases 5'-UGUG-3' in the conserved 3'-sequence of plus-strand RNA templates. VP2 presumably activates the autoinhibited VP1-RNA complex to coordinate packaging and genome replication. Once dsRNA synthesis is complete, the polymerase switches to the transcriptional mode, thus providing secondary transcription. In Homo sapiens (Human), this protein is RNA-directed RNA polymerase.